Here is a 123-residue protein sequence, read N- to C-terminus: MPTIQQLIRNRREPIENRTKSPALRSCPQRRGVCTRVYTTTPKKPNSALRKVARVRLTSGFEVTAYIPGIGHNLQEHSVVLVRGGRVKDLPGVRYHIVRGTLDSVGVKDRHQGRSKYGAKKPK.

Belongs to the universal ribosomal protein uS12 family. As to quaternary structure, part of the 30S ribosomal subunit.

Its subcellular location is the plastid. The protein localises to the chloroplast. Functionally, with S4 and S5 plays an important role in translational accuracy. Located at the interface of the 30S and 50S subunits. This is Small ribosomal subunit protein uS12c (rps12) from Chaetosphaeridium globosum (Charophycean green alga).